We begin with the raw amino-acid sequence, 219 residues long: Leukocyte surface antigen CD53 (219 aa).

The Cytoplasmic segment spans residues 1–11; sequence MGMSSLKLLKF. The helical transmembrane segment at 12-32 threads the bilayer; it reads VLFFFNLIFWFCGCCILGLGI. Residues 33–54 are Extracellular-facing; the sequence is YLLIHSKFGVLFHNLPSLTLGN. Residues 55 to 69 traverse the membrane as a helical segment; sequence VLVIVGSVIMVVAFL. Residues 70–80 are Cytoplasmic-facing; the sequence is GCMGSIKENKC. Residues 81-106 form a helical membrane-spanning segment; the sequence is LLMSFFVLLLIILLAEVTLAILLFVY. Residues 107-181 lie on the Extracellular side of the membrane; sequence EQKLKEYVAE…IQAKQWFHSN (75 aa). 2 N-linked (GlcNAc...) asparagine glycosylation sites follow: N129 and N148. Residues 182–206 traverse the membrane as a helical segment; that stretch reads FLYIGITTICVCVIQVLGMSFALTL. The Cytoplasmic segment spans residues 207 to 219; it reads NCQIDKTSQVLGL.

It belongs to the tetraspanin (TM4SF) family. In terms of assembly, interacts with SCIMP. Interacts with CD45/PTPRC. Interacts with IL7R. Interacts with RBL2 and PPP2CA.

The protein resides in the cell membrane. The protein localises to the cell junction. It localises to the membrane. Its subcellular location is the synapse. Its function is as follows. Structural component of specialized membrane microdomains known as tetraspanin-enriched microdomains (TERMs), which act as platforms for receptor clustering and signaling. Participates thereby in diverse biological functions such as cell signal transduction, adhesion, migration and protein trafficking. Plays a role in the activation of monocytes and B-cells. Acts as an essential regulator of B-cell development by promoting interleukin-7 receptor/IL7R signaling. Also promotes, in B-cells, the BCR signaling by recruiting PKC to the plasma membrane in order to phosphorylate its substrates. Plays an essential role in B- and T-cells homing to lymph nodes by stabilizing L-selectin/SELL cell surface expression. Also mediates metabolic and inflammatory functions in hepatocytes and adipose tissue by promoting TNF-alpha and LPS signaling independent of the immune compartment. In Bos taurus (Bovine), this protein is Leukocyte surface antigen CD53 (CD53).